The sequence spans 480 residues: CASP8 and FADD-like apoptosis regulator (480 aa).

DED domains are found at residues 1 to 73 and 92 to 170; these read MSAE…RILK and DYRV…KIQK. An interaction with CASP8 region spans residues 1–195; the sequence is MSAEVIHQVE…LQAAIQKSLK (195 aa). An interaction with FADD region spans residues 1–227; that stretch reads MSAEVIHQVE…GAQQEPVKKS (227 aa). Residues 1–305 are interaction with CASP8 propeptide; sequence MSAEVIHQVE…FACMPEHRDY (305 aa). The interval 1-435 is not proteolytically processed and involved in apoptosis inhibition; sequence MSAEVIHQVE…CLSQKLRQER (435 aa). Positions 192-435 are interaction with CASP3; that stretch reads KSLKDPSNNF…CLSQKLRQER (244 aa). The segment at 192–480 is interaction with TRAF1 and TRAF2; the sequence is KSLKDPSNNF…LRKKLILSYT (289 aa). Residues 217–480 form an interaction with CASP8 subunits p18 and p10 region; that stretch reads LGAQQEPVKK…LRKKLILSYT (264 aa). The segment at 263 to 358 is caspase; the sequence is ETELLRDTFT…AGKPKMFFIQ (96 aa). The tract at residues 370 to 480 is interaction with CASP8; that stretch reads SSLLEVDGPA…LRKKLILSYT (111 aa).

It belongs to the peptidase C14A family. In terms of assembly, TNFRSF6 stimulation triggers recruitment to the death-inducing signaling complex (DISC) formed by TNFRSF6, FADD and CASP8. A proteolytic fragment (p43) stays associated with the DISC. Also interacts with FADD, CASP8, CASP3, TRAF1, TRAF2 and Bcl-X(L) (in vitro). Interacts with RIPK1. As to quaternary structure, (Microbial infection) Interacts with HBV protein X. Proteolytically processed by CASP8 generating subunit p43 and p12. In terms of tissue distribution, widely expressed. Higher expression in skeletal muscle, pancreas, heart, kidney, placenta, and peripheral blood leukocytes. Also detected in diverse cell lines. Isoform 8 is predominantly expressed in testis and skeletal muscle.

Its function is as follows. Apoptosis regulator protein which may function as a crucial link between cell survival and cell death pathways in mammalian cells. Acts as an inhibitor of TNFRSF6 mediated apoptosis. A proteolytic fragment (p43) is likely retained in the death-inducing signaling complex (DISC) thereby blocking further recruitment and processing of caspase-8 at the complex. Full length and shorter isoforms have been shown either to induce apoptosis or to reduce TNFRSF-triggered apoptosis. Lacks enzymatic (caspase) activity. This chain is CASP8 and FADD-like apoptosis regulator (CFLAR), found in Homo sapiens (Human).